The sequence spans 441 residues: Ribulose bisphosphate carboxylase large chain (441 aa).

Substrate contacts are provided by Asn-89 and Thr-139. The Proton acceptor role is filled by Lys-141. Substrate is bound at residue Lys-143. Mg(2+) is bound by residues Lys-167, Asp-169, and Glu-170. Lys-167 bears the N6-carboxylysine mark. The active-site Proton acceptor is the His-260. The substrate site is built by Xaa-261 and Ser-345.

This sequence belongs to the RuBisCO large chain family. Type I subfamily. In terms of assembly, heterohexadecamer of 8 large chains and 8 small chains; disulfide-linked. The disulfide link is formed within the large subunit homodimers. Mg(2+) is required as a cofactor. Post-translationally, the disulfide bond which can form in the large chain dimeric partners within the hexadecamer appears to be associated with oxidative stress and protein turnover.

Its subcellular location is the plastid. The protein resides in the chloroplast. The enzyme catalyses 2 (2R)-3-phosphoglycerate + 2 H(+) = D-ribulose 1,5-bisphosphate + CO2 + H2O. It catalyses the reaction D-ribulose 1,5-bisphosphate + O2 = 2-phosphoglycolate + (2R)-3-phosphoglycerate + 2 H(+). RuBisCO catalyzes two reactions: the carboxylation of D-ribulose 1,5-bisphosphate, the primary event in carbon dioxide fixation, as well as the oxidative fragmentation of the pentose substrate in the photorespiration process. Both reactions occur simultaneously and in competition at the same active site. This Asclepias exaltata (Poke milkweed) protein is Ribulose bisphosphate carboxylase large chain.